We begin with the raw amino-acid sequence, 389 residues long: MINAKGRYLFSSESVTEGHPDKVADQISDGILDAILAQDPDAHVACETLVTTGLAFIAGEITTKAYADFPSIVRETVKEIGYNSSTMGFDWETCAVISSVDKQSVDIAQGVSRTKPEDQGAGDQGMMFGFACDETETLMPAPIYWAHKLSRRLTEVRKSGVLDFLRPDGKTQVAVEYVDGKPVRIDNVVVASQHAENISHADLCDAVKKEVIFHTLPESLVDKNTKIYINTTGRFVIGGPMGDCGLTGRKIIQDTYGGMGNHGGGAFSGKDPSKVDRSGAYMARYVAKNMVASGACKRCEVQIAYCIGVAEPLSVLVTSMGSSDIPDEALTKAVREVFDLRPYYISKRLDLKRPIYKPTSCYGHFGREQAGFTWEVTDAAADLRTALKI.

His19 contacts ATP. Residue Asp21 participates in Mg(2+) binding. Glu47 contributes to the K(+) binding site. The L-methionine site is built by Glu60 and Gln103. The tract at residues 103–113 (QSVDIAQGVSR) is flexible loop. ATP contacts are provided by residues 168-170 (DGK), 234-235 (RF), Asp243, 249-250 (RK), Ala266, and Lys270. Asp243 provides a ligand contact to L-methionine. Lys274 provides a ligand contact to L-methionine.

It belongs to the AdoMet synthase family. In terms of assembly, homotetramer; dimer of dimers. The cofactor is Mg(2+). It depends on K(+) as a cofactor.

The protein localises to the cytoplasm. It carries out the reaction L-methionine + ATP + H2O = S-adenosyl-L-methionine + phosphate + diphosphate. It participates in amino-acid biosynthesis; S-adenosyl-L-methionine biosynthesis; S-adenosyl-L-methionine from L-methionine: step 1/1. Catalyzes the formation of S-adenosylmethionine (AdoMet) from methionine and ATP. The overall synthetic reaction is composed of two sequential steps, AdoMet formation and the subsequent tripolyphosphate hydrolysis which occurs prior to release of AdoMet from the enzyme. This is S-adenosylmethionine synthase from Solidesulfovibrio magneticus (strain ATCC 700980 / DSM 13731 / RS-1) (Desulfovibrio magneticus).